A 153-amino-acid chain; its full sequence is Peptide deformylase (153 aa).

Residues Cys87 and His129 each coordinate Fe cation. The active site involves Glu130. His133 provides a ligand contact to Fe cation.

Belongs to the polypeptide deformylase family. It depends on Fe(2+) as a cofactor.

The catalysed reaction is N-terminal N-formyl-L-methionyl-[peptide] + H2O = N-terminal L-methionyl-[peptide] + formate. Functionally, removes the formyl group from the N-terminal Met of newly synthesized proteins. Requires at least a dipeptide for an efficient rate of reaction. N-terminal L-methionine is a prerequisite for activity but the enzyme has broad specificity at other positions. The protein is Peptide deformylase of Dictyoglomus thermophilum (strain ATCC 35947 / DSM 3960 / H-6-12).